Consider the following 236-residue polypeptide: Ribonuclease 3 (236 aa).

The RNase III domain occupies 6-140 (FLDFLKQNRI…FIGAVAQDQG (135 aa)). A Mg(2+)-binding site is contributed by Glu46. Asp50 is an active-site residue. Mg(2+)-binding residues include Asp126 and Glu129. Residue Glu129 is part of the active site. Positions 166–231 (DYKTIFQEQA…AKNAILKLDD (66 aa)) constitute a DRBM domain.

Belongs to the ribonuclease III family. In terms of assembly, homodimer. Mg(2+) serves as cofactor.

It is found in the cytoplasm. The catalysed reaction is Endonucleolytic cleavage to 5'-phosphomonoester.. In terms of biological role, digests double-stranded RNA. Involved in the processing of primary rRNA transcript to yield the immediate precursors to the large and small rRNAs (23S and 16S). Processes some mRNAs, and tRNAs when they are encoded in the rRNA operon. Processes pre-crRNA and tracrRNA of type II CRISPR loci if present in the organism. The sequence is that of Ribonuclease 3 from Ureaplasma parvum serovar 3 (strain ATCC 700970).